The primary structure comprises 178 residues: CASP-like protein 2A2 (178 aa).

Over 1–22 the chain is Cytoplasmic; it reads MDKTDQTAIDESALVLNRTEKS. Residues 23–43 traverse the membrane as a helical segment; the sequence is AEAVLRVASMALSITGLVIMI. The Extracellular portion of the chain corresponds to 44–69; sequence KNSISNEFGSVSYSNIGAFMYLVSAN. A helical transmembrane segment spans residues 70–90; it reads GVCAAYSLLSALAILALPCPI. The Cytoplasmic segment spans residues 91 to 96; sequence SKVQVR. A helical membrane pass occupies residues 97–117; the sequence is TLFLLDQVVTYVVLAAGAVSA. Topologically, residues 118–145 are extracellular; it reads ETVYLAYYGNIPITWSSACDSYGSFCHN. A helical transmembrane segment spans residues 146–166; that stretch reads ALISVVFTFVVSLLYMLLSLI. Residues 167–178 lie on the Cytoplasmic side of the membrane; that stretch reads SSYRLFTRFEAP.

This sequence belongs to the Casparian strip membrane proteins (CASP) family. As to quaternary structure, homodimer and heterodimers. Mostly expressed in flowers and buds and, to a lower extent, in roots and yellow siliques. Localized in the floral organ abscission zone.

It is found in the cell membrane. Involved in floral organ shedding. The sequence is that of CASP-like protein 2A2 from Arabidopsis thaliana (Mouse-ear cress).